Here is a 248-residue protein sequence, read N- to C-terminus: MLLMNLFTIINNDVPTPYNMYFQDSTTPHQEGILELHDNIMFYMLTVLGLVSWMMIIIIKDYKNNPITYKYIKHGQMIEIIWTILPAIILLMIAFPSFILLYLCDEVISPAMTIKVIGLQWYWKYEYSDFINDNGETIEYESYMIPEELLEEGQLRMLDTDTSIVIPVDTHVRFIVTATDVIHDFAVPSLGIKIDTTPGRLSQVSTLIQREGIFYGQCSELCGAQHSAMPIKIETVKLPTFLTWLNEQ.

The first 12 residues, 1 to 12 (MLLMNLFTIINN), serve as a signal peptide directing secretion. Residues 13-39 (DVPTPYNMYFQDSTTPHQEGILELHDN) are Mitochondrial intermembrane-facing. Residues 40 to 61 (IMFYMLTVLGLVSWMMIIIIKD) traverse the membrane as a helical segment. The Mitochondrial matrix portion of the chain corresponds to 62–79 (YKNNPITYKYIKHGQMIE). Residues 80–104 (IIWTILPAIILLMIAFPSFILLYLC) traverse the membrane as a helical segment. Residues 105–248 (DEVISPAMTI…PTFLTWLNEQ (144 aa)) are Mitochondrial intermembrane-facing. Cu cation is bound by residues H183, C218, E220, C222, H226, and M229. E220 provides a ligand contact to Mg(2+).

Belongs to the cytochrome c oxidase subunit 2 family. In terms of assembly, component of the cytochrome c oxidase (complex IV, CIV), a multisubunit enzyme composed of a catalytic core of 3 subunits and several supernumerary subunits. The complex exists as a monomer or a dimer and forms supercomplexes (SCs) in the inner mitochondrial membrane with ubiquinol-cytochrome c oxidoreductase (cytochrome b-c1 complex, complex III, CIII). Cu cation is required as a cofactor. In terms of processing, the signal sequence of COX2 is processed by IMP1.

It localises to the mitochondrion inner membrane. It catalyses the reaction 4 Fe(II)-[cytochrome c] + O2 + 8 H(+)(in) = 4 Fe(III)-[cytochrome c] + 2 H2O + 4 H(+)(out). In terms of biological role, component of the cytochrome c oxidase, the last enzyme in the mitochondrial electron transport chain which drives oxidative phosphorylation. The respiratory chain contains 3 multisubunit complexes succinate dehydrogenase (complex II, CII), ubiquinol-cytochrome c oxidoreductase (cytochrome b-c1 complex, complex III, CIII) and cytochrome c oxidase (complex IV, CIV), that cooperate to transfer electrons derived from NADH and succinate to molecular oxygen, creating an electrochemical gradient over the inner membrane that drives transmembrane transport and the ATP synthase. Cytochrome c oxidase is the component of the respiratory chain that catalyzes the reduction of oxygen to water. Electrons originating from reduced cytochrome c in the intermembrane space (IMS) are transferred via the dinuclear copper A center (CU(A)) of subunit 2 and heme A of subunit 1 to the active site in subunit 1, a binuclear center (BNC) formed by heme A3 and copper B (CU(B)). The BNC reduces molecular oxygen to 2 water molecules using 4 electrons from cytochrome c in the IMS and 4 protons from the mitochondrial matrix. In Eremothecium gossypii (strain ATCC 10895 / CBS 109.51 / FGSC 9923 / NRRL Y-1056) (Yeast), this protein is Cytochrome c oxidase subunit 2 (COX2).